A 264-amino-acid polypeptide reads, in one-letter code: MRGVLVTLAVLFLTGTQARSFWQHDDPQTPLDRIRDMLDVYLETVKASGKDAISQFESSAVGKQLDLKLADNLDTLSAAAAKLREDMTPYYREVREMWLKDTEALRAELTKDLEEVKEKIRPFLDQFSAKWTEEVEQYRQRLAPVAQELKDLTKQKVELMQAKLTPVAEEVRDRLREQVEELRKNLAPYSSELRQKLSQKLEEIRERGIPQASEYQAKVVEQLSNLREKMTPLVQEFKERLTPYAENLKNRLIDLLDEVQKTMA.

Residues 1–18 (MRGVLVTLAVLFLTGTQA) form the signal peptide. Tandem repeats lie at residues 67–88 (LKLA…EDMT) and 89–110 (PYYR…AELT). The tract at residues 67 to 264 (LKLADNLDTL…LLDEVQKTMA (198 aa)) is 10 X approximate tandem repeats. A 3; half-length repeat occupies 111 to 121 (KDLEEVKEKIR). Repeat copies occupy residues 122–143 (PFLD…QRLA), 144–165 (PVAQ…AKLT), 166–187 (PVAE…KNLA), 188–209 (PYSS…ERGI), and 210–231 (PQAS…EKMT). A 9; half-length repeat occupies 232 to 242 (PLVQEFKERLT). Repeat 10 spans residues 243 to 264 (PYAENLKNRLIDLLDEVQKTMA).

The protein belongs to the apolipoprotein A1/A4/E family. As to expression, major protein of VLDL, HDL, LDL and in chylomicrons. Expressed in a number of tissues including liver, small intestine, lung, kidney, heart and muscle with highest expression in liver and small intestine.

The protein localises to the secreted. Functionally, participates in the reverse transport of cholesterol from tissues to the liver for excretion by promoting cholesterol efflux from tissues and by acting as a cofactor for the lecithin cholesterol acyltransferase (LCAT). In Coturnix japonica (Japanese quail), this protein is Apolipoprotein A-I (APOA1).